A 272-amino-acid polypeptide reads, in one-letter code: Bifunctional protein FolD 2 (272 aa).

NADP(+) is bound by residues 157 to 159 (GRS), Thr182, and Ile223.

The protein belongs to the tetrahydrofolate dehydrogenase/cyclohydrolase family. Homodimer.

The catalysed reaction is (6R)-5,10-methylene-5,6,7,8-tetrahydrofolate + NADP(+) = (6R)-5,10-methenyltetrahydrofolate + NADPH. It catalyses the reaction (6R)-5,10-methenyltetrahydrofolate + H2O = (6R)-10-formyltetrahydrofolate + H(+). It functions in the pathway one-carbon metabolism; tetrahydrofolate interconversion. Functionally, catalyzes the oxidation of 5,10-methylenetetrahydrofolate to 5,10-methenyltetrahydrofolate and then the hydrolysis of 5,10-methenyltetrahydrofolate to 10-formyltetrahydrofolate. The sequence is that of Bifunctional protein FolD 2 from Syntrophomonas wolfei subsp. wolfei (strain DSM 2245B / Goettingen).